The primary structure comprises 102 residues: UPF0235 protein msl4154 (102 aa).

The protein belongs to the UPF0235 family.

The chain is UPF0235 protein msl4154 from Mesorhizobium japonicum (strain LMG 29417 / CECT 9101 / MAFF 303099) (Mesorhizobium loti (strain MAFF 303099)).